We begin with the raw amino-acid sequence, 838 residues long: Translation initiation factor IF-2 (838 aa).

Disordered stretches follow at residues 30-60 and 94-254; these read PHTAAEEHVSDSEKQSLLTHLKSSHKAKVEE and QRSP…PTGP. Composition is skewed to basic and acidic residues over residues 33–43 and 96–136; these read AAEEHVSDSEK and SPEE…EARR. Residues 137–173 are compositionally biased toward low complexity; that stretch reads QPAPVAEPVAAQAAAPAPAPVVEPVQEAPVATAAPAA. Basic and acidic residues-rich tracts occupy residues 174 to 214 and 222 to 231; these read DARK…EKAP and TTDEESDGFR. Positions 232-245 are enriched in basic residues; it reads RGGRGKAKLKKRNA. One can recognise a tr-type G domain in the interval 338–507; it reads ARAPVVTVMG…LLQAEVLELK (170 aa). The G1 stretch occupies residues 347–354; the sequence is GHVDHGKT. 347–354 contributes to the GTP binding site; that stretch reads GHVDHGKT. A G2 region spans residues 372–376; it reads GITQH. Residues 393–396 are G3; the sequence is DTPG. GTP contacts are provided by residues 393-397 and 447-450; these read DTPGH and NKID. The tract at residues 447–450 is G4; the sequence is NKID. Residues 483–485 form a G5 region; it reads SAK.

The protein belongs to the TRAFAC class translation factor GTPase superfamily. Classic translation factor GTPase family. IF-2 subfamily.

It localises to the cytoplasm. Its function is as follows. One of the essential components for the initiation of protein synthesis. Protects formylmethionyl-tRNA from spontaneous hydrolysis and promotes its binding to the 30S ribosomal subunits. Also involved in the hydrolysis of GTP during the formation of the 70S ribosomal complex. This is Translation initiation factor IF-2 from Pseudomonas fluorescens (strain ATCC BAA-477 / NRRL B-23932 / Pf-5).